We begin with the raw amino-acid sequence, 284 residues long: D-tagatose-1,6-bisphosphate aldolase subunit GatY (284 aa).

Asp-82 (proton donor) is an active-site residue. Zn(2+) is bound by residues His-83 and His-180. Gly-181 provides a ligand contact to dihydroxyacetone phosphate. His-208 contacts Zn(2+). Residues 209–211 (GAS) and 230–233 (NVAT) contribute to the dihydroxyacetone phosphate site.

Belongs to the class II fructose-bisphosphate aldolase family. TagBP aldolase GatY subfamily. As to quaternary structure, forms a complex with GatZ. Zn(2+) serves as cofactor.

It carries out the reaction D-tagatofuranose 1,6-bisphosphate = D-glyceraldehyde 3-phosphate + dihydroxyacetone phosphate. The protein operates within carbohydrate metabolism; D-tagatose 6-phosphate degradation; D-glyceraldehyde 3-phosphate and glycerone phosphate from D-tagatose 6-phosphate: step 2/2. Its function is as follows. Catalytic subunit of the tagatose-1,6-bisphosphate aldolase GatYZ, which catalyzes the reversible aldol condensation of dihydroxyacetone phosphate (DHAP or glycerone-phosphate) with glyceraldehyde 3-phosphate (G3P) to produce tagatose 1,6-bisphosphate (TBP). Requires GatZ subunit for full activity and stability. Is involved in the catabolism of galactitol. In Salmonella paratyphi B (strain ATCC BAA-1250 / SPB7), this protein is D-tagatose-1,6-bisphosphate aldolase subunit GatY.